A 3919-amino-acid chain; its full sequence is Intermembrane lipid transfer protein Vps13D (3919 aa).

The 111-residue stretch at 4–114 (DLITWVLNTY…QDLEYKLAVL (111 aa)) folds into the Chorein N-terminal domain. Positions 706-736 (TSDDDETYLTPCSTPPASEKSGSESPTLLEN) are disordered. The region spanning 2292–2334 (KADSDLEKAAPLVAMGFEISDCLYAMQINNWRINDAAIWLSQQ) is the UBA domain. One can recognise an SHR-BD domain in the interval 2837 to 3113 (ELYISAPVWI…YVMDDPLGQQ (277 aa)). The segment at 3749-3768 (VRETSRDSHRNAPERKRLPR) is disordered. Basic and acidic residues predominate over residues 3751-3764 (ETSRDSHRNAPERK).

It belongs to the VPS13 family. In terms of tissue distribution, expressed in intestinal cells (at protein level).

Its subcellular location is the cytoplasm. The protein resides in the lysosome. Its function is as follows. Mediates the transfer of lipids between membranes at organelle contact sites. Functions in promoting mitochondrial clearance by mitochondrial autophagy (mitophagy), also possibly by positively regulating mitochondrial fission. Mitophagy plays an important role in regulating cell health and mitochondrial size and homeostasis. In Drosophila melanogaster (Fruit fly), this protein is Intermembrane lipid transfer protein Vps13D.